The chain runs to 274 residues: Small nuclear ribonucleoprotein-associated protein B (274 aa).

The 81-residue stretch at 5–85 (PKSSKMLQYI…VVSMSVEAPP (81 aa)) folds into the Sm domain. The interval 148-274 (PGGGVPPPMG…PMGRGGFQRK (127 aa)) is disordered. Repeat unit 1 spans residues 162 to 171 (PPQGFPPGGP). Positions 162–265 (PPQGFPPGGP…PPQGFPPGGP (104 aa)) are 6 X 10 AA repeats of P-P-Q-G-F-P-P-G-G-P. Low complexity predominate over residues 173-187 (PQGAFNNNPNNNNGG). 5 consecutive repeat copies span residues 188–197 (PPQGFPPGGP), 204–213 (PPQGFPPGGP), 225–234 (PPQGFPPGGP), 241–250 (PPQGFPPGGP), and 256–265 (PPQGFPPGGP). Residues 216 to 226 (GPNLNNGNMPP) are compositionally biased toward low complexity. Residues 265–274 (PMGRGGFQRK) show a composition bias toward gly residues.

This sequence belongs to the snRNP SmB/SmN family.

It is found in the cytoplasm. It localises to the cytosol. The protein resides in the nucleus. Plays a role in pre-mRNA splicing as a core component of the spliceosomal U1, U2, U4 and U5 small nuclear ribonucleoproteins (snRNPs), the building blocks of the spliceosome. The polypeptide is Small nuclear ribonucleoprotein-associated protein B (snrpb) (Dictyostelium discoideum (Social amoeba)).